We begin with the raw amino-acid sequence, 391 residues long: Imidazolonepropionase (391 aa).

The Fe(3+) site is built by H72 and H74. Positions 72 and 74 each coordinate Zn(2+). 4-imidazolone-5-propanoate is bound by residues R81, Y139, and H166. Y139 provides a ligand contact to N-formimidoyl-L-glutamate. Residue H229 participates in Fe(3+) binding. H229 contacts Zn(2+). Q232 contacts 4-imidazolone-5-propanoate. D303 contributes to the Fe(3+) binding site. Zn(2+) is bound at residue D303. N-formimidoyl-L-glutamate-binding residues include N305 and G307. S308 is a 4-imidazolone-5-propanoate binding site.

The protein belongs to the metallo-dependent hydrolases superfamily. HutI family. The cofactor is Zn(2+). It depends on Fe(3+) as a cofactor.

Its subcellular location is the cytoplasm. The enzyme catalyses 4-imidazolone-5-propanoate + H2O = N-formimidoyl-L-glutamate. It functions in the pathway amino-acid degradation; L-histidine degradation into L-glutamate; N-formimidoyl-L-glutamate from L-histidine: step 3/3. Functionally, catalyzes the hydrolytic cleavage of the carbon-nitrogen bond in imidazolone-5-propanoate to yield N-formimidoyl-L-glutamate. It is the third step in the universal histidine degradation pathway. This Streptomyces coelicolor (strain ATCC BAA-471 / A3(2) / M145) protein is Imidazolonepropionase.